A 427-amino-acid chain; its full sequence is Lactadherin (427 aa).

A signal peptide spans 1 to 18 (MPCPRLLAALFCSSGLFA). EGF-like domains follow at residues 20 to 59 (SGDF…LLCN) and 62 to 106 (EHGP…IHCE). Disulfide bonds link Cys24-Cys35, Cys29-Cys47, and Cys49-Cys58. Ser27 carries O-linked (Fuc...) serine; in PAS-6 glycosylation. Thr34 carries an O-linked (Fuc...) threonine; in PAS-7 glycan. An N-linked (GlcNAc...) (hybrid) asparagine; in PAS-6 and PAS-7 glycan is attached at Asn59. Disulfide bonds link Cys66-Cys77, Cys71-Cys94, Cys96-Cys105, Cys109-Cys265, Cys252-Cys256, and Cys270-Cys427. The Cell attachment site motif lies at 85–87 (RGD). F5/8 type C domains are found at residues 109-265 (CTSP…LLGC) and 270-427 (CTEP…LLGC). A glycan (N-linked (GlcNAc...) (high mannose) asparagine; in PAS-6) is linked at Asn227.

The two O-linked glycans consist of Gal, GlcNAc and Fuc, with probably Fuc as reducing terminal sugar. Milk and spermatozoan. Also present in epididymis, kidney, heart, lymphatic gland and spleen but not esophagus, small intestine, muscle and liver.

The protein localises to the membrane. Its subcellular location is the secreted. The protein resides in the cytoplasmic vesicle. It is found in the secretory vesicle. It localises to the acrosome membrane. In terms of biological role, contributes to phagocytic removal of apoptotic cells in many tissues. Plays an important role in the maintenance of intestinal epithelial homeostasis and the promotion of mucosal healing. Promotes VEGF-dependent neovascularization. Specific ligand for the alpha-v/beta-3 and alpha-v/beta-5 receptors. Also binds to phosphatidylserine-enriched cell surfaces in a receptor-independent manner. Zona pellucida-binding protein which may play a role in gamete interaction. The chain is Lactadherin (MFGE8) from Bos taurus (Bovine).